Here is a 158-residue protein sequence, read N- to C-terminus: NADH-quinone oxidoreductase subunit B 2 (158 aa).

[4Fe-4S] cluster is bound by residues C37, C38, C102, and C132.

It belongs to the complex I 20 kDa subunit family. NDH-1 is composed of 14 different subunits. Subunits NuoB, C, D, E, F, and G constitute the peripheral sector of the complex. Requires [4Fe-4S] cluster as cofactor.

The protein localises to the cell inner membrane. The catalysed reaction is a quinone + NADH + 5 H(+)(in) = a quinol + NAD(+) + 4 H(+)(out). In terms of biological role, NDH-1 shuttles electrons from NADH, via FMN and iron-sulfur (Fe-S) centers, to quinones in the respiratory chain. Couples the redox reaction to proton translocation (for every two electrons transferred, four hydrogen ions are translocated across the cytoplasmic membrane), and thus conserves the redox energy in a proton gradient. In Nitrosospira multiformis (strain ATCC 25196 / NCIMB 11849 / C 71), this protein is NADH-quinone oxidoreductase subunit B 2.